The following is a 266-amino-acid chain: F-actin-capping protein subunit alpha (266 aa).

It belongs to the F-actin-capping protein alpha subunit family. As to quaternary structure, heterodimer of an alpha and a beta subunit.

Its subcellular location is the cytoplasm. It is found in the cytoskeleton. F-actin-capping proteins bind in a Ca(2+)-independent manner to the fast growing ends of actin filaments (barbed end) thereby blocking the exchange of subunits at these ends. Unlike other capping proteins (such as gelsolin and severin), these proteins do not sever actin filaments. This is F-actin-capping protein subunit alpha (CAP1) from Debaryomyces hansenii (strain ATCC 36239 / CBS 767 / BCRC 21394 / JCM 1990 / NBRC 0083 / IGC 2968) (Yeast).